Reading from the N-terminus, the 562-residue chain is tRNA (guanine(37)-N(1))-methyltransferase (562 aa).

The transit peptide at 1–41 (MLFRRFLNLTTKTPHLQTFRARHYFRNMSCPELIPPPTVRG) directs the protein to the mitochondrion. S-adenosyl-L-methionine-binding positions include His243, 281 to 282 (DL), and Asn340. Basic and acidic residues predominate over residues 523–534 (AHIVAKKPEKKP). The segment at 523–562 (AHIVAKKPEKKPLPAKPASKKNKNQANTKQVEAGLDKMQM) is disordered.

Belongs to the class I-like SAM-binding methyltransferase superfamily. TRM5/TYW2 family. Monomer.

Its subcellular location is the mitochondrion matrix. The protein resides in the nucleus. The protein localises to the cytoplasm. The enzyme catalyses guanosine(37) in tRNA + S-adenosyl-L-methionine = N(1)-methylguanosine(37) in tRNA + S-adenosyl-L-homocysteine + H(+). Functionally, specifically methylates the N1 position of guanosine-37 in various cytoplasmic and mitochondrial tRNAs. Methylation is not dependent on the nature of the nucleoside 5' of the target nucleoside. This is the first step in the biosynthesis of wybutosine (yW), a modified base adjacent to the anticodon of tRNAs and required for accurate decoding. This chain is tRNA (guanine(37)-N(1))-methyltransferase, found in Aedes aegypti (Yellowfever mosquito).